The sequence spans 882 residues: DNA mismatch repair protein MutS (882 aa).

656-663 (GPNASGKS) is a binding site for ATP.

It belongs to the DNA mismatch repair MutS family.

This protein is involved in the repair of mismatches in DNA. It is possible that it carries out the mismatch recognition step. This protein has a weak ATPase activity. The chain is DNA mismatch repair protein MutS from Synechococcus elongatus (strain ATCC 33912 / PCC 7942 / FACHB-805) (Anacystis nidulans R2).